An 882-amino-acid chain; its full sequence is MAEHSAPVLEIDPKYGPFDKHTPMMQQYLRLKSGHPNTLVFYRMGDFYELFFEDAEKASRLLDITLTARGSSNGHPIRMAGIPFHAAEQYLAKLVKLGESVAICEQIGDPATAKGPVERKVVRVVTPGTLTDAALLSDKINNHLLAIAHLPAKRGAAPLIGLAWLNLVGGELRVMECSPDQLDRELERIRPAEVLADDATLNTIQVDVARTRLPDWHFDVEAGTRRLREQLGVASLVAFGAETLTAALAAAGALLNYAAATQGQSLRHVIGLTVEHESEFIGLDTATRRNLELTETLRGQESPTLFSLLDTCATSMGSRLLRHWLHHPLRDRAIPQARQQAIEVLLGGDWQTLRSTLRTLSDVERITGRLALLSARPRDLSSLRDTLARLPEIREELPQSDAAPLLIELYAALTLPEDAHALLQRAVMAEPAAMVRDGGVIARGYDADLDELRDISENCGQFLVDLEARERERTGIANLRVEYNRVHGFYIEVTNGQAAKVPDDYRRRQTLKNAERYITPELKAFEDKALSAQDRALSREKLLYEELLQKLLPHLAEFKRIAAALAQADVLATLAERAHALSWSRPTLTDAPGIELTRARHPVVEQQVEQFVANDCMLQEARKLLLITGPNMGGKSTFMRQTALVVLLAYVGAFVPAEAAVIGPIDRIFTRIGAADDLAGGRSTFMVEMTEAAAILHRATPNSLVLMDEIGRGTSTFDGLALAWAIARHLLSHNRSHTLFATHYFELTQLPQEFAQAANVHLSAVEHGDGIVFLHAVQEGPASQSYGLQVAQLAGVPQPVIRAARKRLAWLEQHSADTGATPQLDLFALAADMPIVDEGDADAETPDSALADALAGIDPDDMTPREALDALYRLKALASPAA.

629 to 636 (GPNMGGKS) is a binding site for ATP.

The protein belongs to the DNA mismatch repair MutS family.

Its function is as follows. This protein is involved in the repair of mismatches in DNA. It is possible that it carries out the mismatch recognition step. This protein has a weak ATPase activity. This is DNA mismatch repair protein MutS from Ralstonia pickettii (strain 12J).